Reading from the N-terminus, the 466-residue chain is Ankyrin repeat and SOCS box protein 18 (466 aa).

ANK repeat units lie at residues 119–148 (ELTTPLCIAAAHGHTACVRHLLGRGADPDA), 151–180 (GGRGALHEACLGGHTACVRLLLQHRADPDL), 184–213 (EGLAPLHLCRTAASLGCAQALLEHGASVQR), 218–247 (GRDTPLHVAAQRGLDEHARLYLGRGAHVDA), 251–288 (RGETALSAACGAARRPDEHGRCLRLCALLLRRGAEADA), and 292–321 (DERSPLHKACGHASHSLARLLLRHGADAGA). An SOCS box domain is found at 405 to 463 (QMHKPFYQSLFALALTPRCLQHLCRCALRRLFGKRCFDLIPLLPLPKPLQNYLLLEPQG).

The protein belongs to the ankyrin SOCS box (ASB) family.

It participates in protein modification; protein ubiquitination. Its function is as follows. May be a substrate-recognition component of a SCF-like ECS (Elongin-Cullin-SOCS-box protein) E3 ubiquitin-protein ligase complex which mediates the ubiquitination and subsequent proteasomal degradation of target proteins. The chain is Ankyrin repeat and SOCS box protein 18 (ASB18) from Homo sapiens (Human).